The chain runs to 305 residues: Heterogeneous nuclear ribonucleoprotein A0 (305 aa).

Position 1 is an N-acetylmethionine (methionine 1). The RRM 1 domain occupies 7–86 (CKLFIGGLNV…VELKRAVSRE (80 aa)). Serine 68 bears the Phosphoserine mark. Lysine 80 participates in a covalent cross-link: Glycyl lysine isopeptide (Lys-Gly) (interchain with G-Cter in SUMO2). Serine 84 carries the phosphoserine; by MAPKAPK2 modification. Glycyl lysine isopeptide (Lys-Gly) (interchain with G-Cter in SUMO2) cross-links involve residues lysine 96, lysine 98, lysine 99, and lysine 106. The RRM 2 domain occupies 98–175 (KKLFVGGLKG…HRVEVKKAVP (78 aa)). N6-acetyllysine is present on lysine 133. Residue arginine 139 is modified to Omega-N-methylarginine. Residues lysine 154, lysine 159, lysine 172, and lysine 176 each participate in a glycyl lysine isopeptide (Lys-Gly) (interchain with G-Cter in SUMO2) cross-link. Disordered regions lie at residues 178–211 (DIHAGGGGARAARGGRGGGRGRGGGGGGGGRDQN) and 265–305 (QSSY…GGSF). 2 stretches are compositionally biased toward gly residues: residues 181-211 (AGGGGARAARGGRGGGRGRGGGGGGGGRDQN) and 272-284 (KSGGGGGGGGSWG). Residue arginine 286 is modified to Omega-N-methylarginine. Gly residues predominate over residues 292–305 (YRGGYGGGYGGGSF). Position 293 is an asymmetric dimethylarginine; alternate (arginine 293). Dimethylated arginine; alternate is present on arginine 293. An Omega-N-methylarginine; alternate modification is found at arginine 293.

In terms of processing, phosphorylated at Ser-84 by MAPKAPK2 in response to LPS treatment, promoting stabilization of GADD45A mRNA. Arg-293 is dimethylated, probably to asymmetric dimethylarginine.

The protein resides in the nucleus. Its function is as follows. mRNA-binding component of ribonucleosomes. Specifically binds AU-rich element (ARE)-containing mRNAs. Involved in post-transcriptional regulation of cytokines mRNAs. The polypeptide is Heterogeneous nuclear ribonucleoprotein A0 (Hnrnpa0) (Mus musculus (Mouse)).